Here is a 288-residue protein sequence, read N- to C-terminus: Leucine-rich repeat-containing protein 72 (288 aa).

4 LRR repeats span residues 47–68, 69–90, 91–112, and 113–134; these read DVFELFLSQKELTEVIDLSRFK, KLKYLWLHHNKLHGITFLTRNY, CLAELYLNNNAIFDIEGLHYLP, and SLHILLLHHNELINLDATVKEL. The LRRCT domain maps to 148 to 186; that stretch reads NPLCQYNLYRLYIIYHLPGVELLDRNQVTEKERRSMITL.

This chain is Leucine-rich repeat-containing protein 72 (LRRC72), found in Bos taurus (Bovine).